We begin with the raw amino-acid sequence, 1001 residues long: Phosphatidylinositol 4,5-bisphosphate 5-phosphatase A (1001 aa).

Residues 1 to 12 (MEGQSRSGSAKS) show a composition bias toward polar residues. 2 disordered regions span residues 1 to 130 (MEGQ…VASV) and 144 to 412 (SASA…QPTC). Residues 6–11 (RSGSAK) carry the RSXSXX motif 1 motif. The span at 13–28 (GTRTGLGPLPGTHGAL) shows a compositional bias: low complexity. Residues 29–42 (QTGTPSKKVNSSFQ) show a composition bias toward polar residues. Residue Arg-56 is modified to Asymmetric dimethylarginine; alternate. Omega-N-methylarginine; alternate is present on Arg-56. The residue at position 65 (Arg-65) is an Omega-N-methylarginine. Arg-76 carries the asymmetric dimethylarginine modification. Asymmetric dimethylarginine; alternate is present on Arg-83. Arg-83 is modified (omega-N-methylarginine; alternate). Residues 161–174 (SPTSRDQKQLSPTS) show a composition bias toward polar residues. Phosphoserine is present on Ser-171. A compositionally biased stretch (low complexity) spans 180–196 (ALATSGLSLALASQEQP). Residues 197-210 (PQSPSSPSPVPSPV) show a composition bias toward pro residues. A compositionally biased stretch (basic and acidic residues) spans 284–294 (ARPEAPRHSPE). Residues Ser-292 and Ser-325 each carry the phosphoserine modification. The span at 338 to 348 (VPPPLPKPPRS) shows a compositional bias: pro residues. The short motif at 346–351 (PRSPSR) is the SH3-binding element. Composition is skewed to low complexity over residues 349–361 (PSRS…NRSP) and 394–411 (SPVA…AQPT). The RSXSXX motif 2 signature appears at 351-356 (RSPSRS). The catalytic stretch occupies residues 420–723 (ITVVTWNVGT…SDHKPVAARF (304 aa)). Positions 724–835 (LLQFAFRDDV…IGVTEPFQIS (112 aa)) are required for ruffle localization. Positions 837–1001 (PTSESASSST…LGLEDGGLGP (165 aa)) are disordered. A compositionally biased stretch (low complexity) spans 838–853 (TSESASSSTDSSGTSS). Short sequence motifs (RSXSXX motif) lie at residues 869-874 (RSPSPG) and 880-885 (RSRSPG). Ser-898 carries the post-translational modification Phosphoserine. 2 stretches are compositionally biased toward low complexity: residues 905-917 (SRSP…QLPR) and 925-936 (SSGSRGSSEEGP). An RSXSXX motif 5 motif is present at residues 906–911 (RSPSPQ). Over residues 937 to 949 (SGPPGPWAFPPAV) the composition is skewed to pro residues. Ser-985 bears the Phosphoserine mark.

This sequence belongs to the inositol 1,4,5-trisphosphate 5-phosphatase type II family. Post-translationally, phosphorylated on Ser/Thr residues. Expressed in heart, brain, kidney, stomach, small intestine and lung. Not expressed in spleen, thymus, skeletal muscle, testis and skin.

The protein localises to the cytoplasm. The enzyme catalyses 1D-myo-inositol 1,4,5-trisphosphate + H2O = 1D-myo-inositol 1,4-bisphosphate + phosphate. It carries out the reaction 1D-myo-inositol 1,3,4,5-tetrakisphosphate + H2O = 1D-myo-inositol 1,3,4-trisphosphate + phosphate. The catalysed reaction is a 1,2-diacyl-sn-glycero-3-phospho-(1D-myo-inositol-4,5-bisphosphate) + H2O = a 1,2-diacyl-sn-glycero-3-phospho-(1D-myo-inositol 4-phosphate) + phosphate. In terms of biological role, inositol 5-phosphatase, which converts inositol 1,4,5-trisphosphate to inositol 1,4-bisphosphate. Also converts phosphatidylinositol 4,5-bisphosphate to phosphatidylinositol 4-phosphate and inositol 1,3,4,5-tetrakisphosphate to inositol 1,3,4-trisphosphate in vitro. May be involved in modulation of the function of inositol and phosphatidylinositol polyphosphate-binding proteins that are present at membranes ruffles. The sequence is that of Phosphatidylinositol 4,5-bisphosphate 5-phosphatase A (Inpp5j) from Rattus norvegicus (Rat).